The sequence spans 164 residues: Urocortin-3 (164 aa).

An N-terminal signal peptide occupies residues 1 to 23; it reads MLMPTYFLLPLLLLLGGPRTSLS. A propeptide spanning residues 24-121 is cleaved from the precursor; it reads HKFYNTGPVF…PDKPKSDRGT (98 aa). The disordered stretch occupies residues 58–120; it reads SFGHLPTQDP…YPDKPKSDRG (63 aa). Residues 110-120 show a composition bias toward basic and acidic residues; the sequence is LYPDKPKSDRG. Isoleucine amide is present on Ile160.

It belongs to the sauvagine/corticotropin-releasing factor/urotensin I family. In terms of assembly, binds with high affinity to CRF receptors 2-alpha and 2-beta. Expressed in some areas of the brain including the hypothalamus, amygdala, and brainstem, but is not evident in the cerebellum, pituitary, or cerebral cortex; it is also expressed peripherally in small intestine and skin.

It localises to the secreted. Its function is as follows. Suppresses food intake, delays gastric emptying and decreases heat-induced edema. Might represent an endogenous ligand for maintaining homeostasis after stress. In Mus musculus (Mouse), this protein is Urocortin-3 (Ucn3).